Reading from the N-terminus, the 318-residue chain is Epithelial-stromal interaction protein 1 (318 aa).

Residues 1 to 60 (MNTRNRVVNSGLGASPASRPTRDPQDPSGRQGELSPVEDQREGLEAAPKGPSRESVVHAG) form a disordered region. Coiled-coil stretches lie at residues 73–188 (NINR…HQQY) and 240–280 (LKAE…HQTE).

As to expression, highly expressed in placenta, small intestine, spleen, kidney, thymus, liver, salivary gland and testes. Weakly expressed in breast, skeletal muscle and colon. Highly expressed in breast cancer upon interaction between tumor cells and stromal cells in vitro. Expressed in blood mononuclear cells from patients with systemic lupus erythematosus (SLE).

In terms of biological role, plays a role in M1 macrophage polarization and is required for the proper regulation of gene expression during M1 versus M2 macrophage differentiation. Might play a role in RELA/p65 and STAT1 phosphorylation and nuclear localization upon activation of macrophages. The sequence is that of Epithelial-stromal interaction protein 1 (EPSTI1) from Homo sapiens (Human).